Reading from the N-terminus, the 373-residue chain is MEQTVHVPLGARAYDVVIGPDLVAQAGQRIAPLLRRKTVAVLTDETVAALHLEALRAGLAADGIEMEALALPPGEATKGWPQFTRAVEWLLDKKVERGDIVIAFGGGVIGDLAGFAAAVLRRGVRFVQIPTSLLAQVDSSVGGKTGINAPQGKNLIGAFHQPSLVLADTAVLGTLTERDFLAGYGEVVKYGLLGDAAFFDWLEENAPAMAAGDMALRVEAVARSVQMKADIVARDETEQGDRALLNLGHTFCHALEAATGYSDRLLHGEGVAIGCALAFELSARLGLCSQEDPSRVRAHLKAMGMKTDLSDIPGDLPPAQELLDLMAQDKKVVDGQLRFILARGIGAAFVTADVPSEKVLEVLQEALAHTQPA.

Residues 107 to 111, 131 to 132, Lys-144, and Lys-153 contribute to the NAD(+) site; these read GVIGD and TS. Zn(2+) contacts are provided by Glu-186, His-249, and His-267.

It belongs to the sugar phosphate cyclases superfamily. Dehydroquinate synthase family. The cofactor is Co(2+). Zn(2+) serves as cofactor. NAD(+) is required as a cofactor.

The protein localises to the cytoplasm. The catalysed reaction is 7-phospho-2-dehydro-3-deoxy-D-arabino-heptonate = 3-dehydroquinate + phosphate. It functions in the pathway metabolic intermediate biosynthesis; chorismate biosynthesis; chorismate from D-erythrose 4-phosphate and phosphoenolpyruvate: step 2/7. Functionally, catalyzes the conversion of 3-deoxy-D-arabino-heptulosonate 7-phosphate (DAHP) to dehydroquinate (DHQ). This chain is 3-dehydroquinate synthase, found in Ruegeria sp. (strain TM1040) (Silicibacter sp.).